We begin with the raw amino-acid sequence, 208 residues long: RNA chaperone ProQ (208 aa).

A compositionally biased stretch (basic and acidic residues) spans 106-127 (SKAKVATRRKEQAKKAREEAKA). A disordered region spans residues 106–154 (SKAKVATRRKEQAKKAREEAKAKKTARAATPPKRRPQPAAKKVEQPVET).

Belongs to the ProQ family.

Its subcellular location is the cytoplasm. In terms of biological role, RNA chaperone with significant RNA binding, RNA strand exchange and RNA duplexing activities. This Aliivibrio fischeri (strain ATCC 700601 / ES114) (Vibrio fischeri) protein is RNA chaperone ProQ.